Consider the following 236-residue polypeptide: 2-C-methyl-D-erythritol 4-phosphate cytidylyltransferase (236 aa).

Belongs to the IspD/TarI cytidylyltransferase family. IspD subfamily.

It carries out the reaction 2-C-methyl-D-erythritol 4-phosphate + CTP + H(+) = 4-CDP-2-C-methyl-D-erythritol + diphosphate. The protein operates within isoprenoid biosynthesis; isopentenyl diphosphate biosynthesis via DXP pathway; isopentenyl diphosphate from 1-deoxy-D-xylulose 5-phosphate: step 2/6. Catalyzes the formation of 4-diphosphocytidyl-2-C-methyl-D-erythritol from CTP and 2-C-methyl-D-erythritol 4-phosphate (MEP). In Paraburkholderia phymatum (strain DSM 17167 / CIP 108236 / LMG 21445 / STM815) (Burkholderia phymatum), this protein is 2-C-methyl-D-erythritol 4-phosphate cytidylyltransferase.